The primary structure comprises 166 residues: Large ribosomal subunit protein uL10 (166 aa).

The protein belongs to the universal ribosomal protein uL10 family. Part of the ribosomal stalk of the 50S ribosomal subunit. The N-terminus interacts with L11 and the large rRNA to form the base of the stalk. The C-terminus forms an elongated spine to which L12 dimers bind in a sequential fashion forming a multimeric L10(L12)X complex.

Its function is as follows. Forms part of the ribosomal stalk, playing a central role in the interaction of the ribosome with GTP-bound translation factors. This is Large ribosomal subunit protein uL10 from Pelagibacter ubique (strain HTCC1062).